Consider the following 507-residue polypeptide: Glycogen synthase (507 aa).

K15 provides a ligand contact to ADP-alpha-D-glucose.

It belongs to the glycosyltransferase 1 family. Bacterial/plant glycogen synthase subfamily.

The enzyme catalyses [(1-&gt;4)-alpha-D-glucosyl](n) + ADP-alpha-D-glucose = [(1-&gt;4)-alpha-D-glucosyl](n+1) + ADP + H(+). The protein operates within glycan biosynthesis; glycogen biosynthesis. Its function is as follows. Synthesizes alpha-1,4-glucan chains using ADP-glucose. This Rhodopirellula baltica (strain DSM 10527 / NCIMB 13988 / SH1) protein is Glycogen synthase.